A 69-amino-acid chain; its full sequence is Conotoxin Eb6.1 (69 aa).

The signal sequence occupies residues 1–17 (VLIIAVLFLTACQLTTA). The propeptide occupies 18–41 (ETYSRGRQKHRARRSTDKNSKWTR). Disulfide bonds link cysteine 43/cysteine 57, cysteine 50/cysteine 61, and cysteine 56/cysteine 68.

Belongs to the conotoxin O1 superfamily. As to expression, expressed by the venom duct.

It is found in the secreted. The protein is Conotoxin Eb6.1 (E1) of Conus ebraeus (Hebrew cone).